We begin with the raw amino-acid sequence, 1144 residues long: Guanine nucleotide-binding protein G(s) subunit alpha isoforms XLas (1144 aa).

4 disordered regions span residues 1-186 (MGML…LAPG), 316-558 (DDDT…PAAG), 622-657 (SASAAPSRAHLRPPSPEIQVADPPTPRPAPRPSAWP), and 735-772 (RSRSLSPGKAKDPMEERRKQMRKEAMEMREQKRADKKR). Residues 31–46 (LEAQGAAAPGAGVGPA) show a composition bias toward low complexity. The span at 343-356 (KSEHAKRPPLERQA) shows a compositional bias: basic and acidic residues. The segment covering 358–369 (ETGNSPISSTTA) has biased composition (polar residues). Basic and acidic residues predominate over residues 370 to 381 (EEAKVPSLERGE). 2 stretches are compositionally biased toward low complexity: residues 467-499 (PAAAAAAEPAAEPAAEPAAEPAAEPAAEPAAEA) and 518-558 (EPAA…PAAG). Over residues 644–654 (PPTPRPAPRPS) the composition is skewed to pro residues. Positions 743-767 (KAKDPMEERRKQMRKEAMEMREQKR) are enriched in basic and acidic residues. Positions 745 to 772 (KDPMEERRKQMRKEAMEMREQKRADKKR) form a coiled coil. Residues 789-1144 (CTHRLLLLGA…RMHLRQYELL (356 aa)) enclose the G-alpha domain. A G1 motif region spans residues 792–805 (RLLLLGAGESGKST). Residue 797–805 (GAGESGKST) participates in GTP binding. Ser804 serves as a coordination point for Mg(2+). Residues 818–840 (FNGEGGEEDPQAARSNSDGEKAT) form a disordered region. A coiled-coil region spans residues 837–863 (EKATKVQDIKNNLKEAIETIVAAMSNL). The tract at residues 946 to 954 (DLPRCRVLT) is G2 motif. GTP contacts are provided by residues 947–954 (LPRCRVLT), 973–977 (DVGGQ), and 1042–1045 (NKQD). Position 951 is an ADP-ribosylarginine; by cholera toxin (Arg951). Thr954 provides a ligand contact to Mg(2+). The tract at residues 969–978 (FHMFDVGGQR) is G3 motif. Residues 1038–1045 (ILFLNKQD) are G4 motif. Position 1102 is a phosphoserine (Ser1102). The interval 1114–1119 (TCAVDT) is G5 motif. Ala1116 provides a ligand contact to GTP.

The protein belongs to the G-alpha family. G(s) subfamily. In terms of assembly, g proteins are composed of 3 units; alpha, beta and gamma. The alpha chain contains the guanine nucleotide binding site. Interacts through its N-terminal region with ALEX which is produced from the same locus in a different open reading frame. This interaction may inhibit its adenylyl cyclase-stimulating activity. Interacts with MAGED2. Enriched in neuroendocrine tissues with a particularly high level of expression in pituitary where it is abundant in intermediate and anterior lobes. In adrenal gland, found in central region containing medullary chromaffin cells but not in cortex. In cerebellum, strongly expressed in perikarya of Purkinje cells. Not detected in liver, kidney or neurohypophysis.

It localises to the cell membrane. The protein localises to the apical cell membrane. Functionally, guanine nucleotide-binding proteins (G proteins) function as transducers in numerous signaling pathways controlled by G protein-coupled receptors (GPCRs). Signaling involves the activation of adenylyl cyclases, resulting in increased levels of the signaling molecule cAMP. GNAS functions downstream of several GPCRs, including beta-adrenergic receptors. XLas isoforms interact with the same set of receptors as Gnas isoforms. This Rattus norvegicus (Rat) protein is Guanine nucleotide-binding protein G(s) subunit alpha isoforms XLas.